Consider the following 88-residue polypeptide: MANTTSAKKATRKIARRTAVNKARRSRVRGFIRKVEEAIATGDLAVATEALKAAQPEIQRAATRGVLHGNTASRKVSRLAQRVKALSA.

The interval 1-21 (MANTTSAKKATRKIARRTAVN) is disordered.

This sequence belongs to the bacterial ribosomal protein bS20 family.

Binds directly to 16S ribosomal RNA. This Agrobacterium fabrum (strain C58 / ATCC 33970) (Agrobacterium tumefaciens (strain C58)) protein is Small ribosomal subunit protein bS20.